We begin with the raw amino-acid sequence, 215 residues long: Protein Thf1 (215 aa).

Residues 188 to 209 are a coiled coil; that stretch reads IELVQETIAAERRKKERRQAEQ.

Belongs to the THF1 family.

Functionally, may be involved in photosynthetic membrane biogenesis. The protein is Protein Thf1 of Synechococcus sp. (strain CC9902).